Consider the following 375-residue polypeptide: Peptidyl-prolyl cis-trans isomerase D (375 aa).

The region spanning 7–169 (YFDITIANEP…QEVTISSAGV (163 aa)) is the PPIase cyclophilin-type domain. 3 TPR repeats span residues 217 to 250 (AGKLKEVGTKEFKAGNFAVALDKYQKALRYLDVH), 270 to 307 (LPLLTNAALCALKLPASPNTSSLVVSLTSRALTLPNLS), and 312 to 345 (GKALYRRAQAYVLKKDDEAAEKDLKGALECVPGD).

This sequence belongs to the cyclophilin-type PPIase family. PPIase D subfamily.

It localises to the cytoplasm. The catalysed reaction is [protein]-peptidylproline (omega=180) = [protein]-peptidylproline (omega=0). PPIases accelerate the folding of proteins. It catalyzes the cis-trans isomerization of proline imidic peptide bonds in oligopeptides. The chain is Peptidyl-prolyl cis-trans isomerase D (CPR6) from Cryptococcus neoformans var. neoformans serotype D (strain B-3501A) (Filobasidiella neoformans).